A 394-amino-acid chain; its full sequence is Penicillopepsin-3 (394 aa).

The N-terminal stretch at 1–20 (MVSFTQLQLAFLGLSALGAA) is a signal peptide. A propeptide spans 21–70 (VPVTGTSEKKTFSLNQVKVAGTKTKNPAEHYANALRKYGAEVPSHVLAAA) (activation peptide). A Peptidase A1 domain is found at 87-392 (YLTPIDVGGT…DASGPRLGFA (306 aa)). Residues Asp-103 and Asp-284 contribute to the active site. The cysteines at positions 320 and 355 are disulfide-linked.

It belongs to the peptidase A1 family. As to quaternary structure, monomer.

It is found in the secreted. The catalysed reaction is Hydrolysis of proteins with broad specificity similar to that of pepsin A, preferring hydrophobic residues at P1 and P1', but also cleaving 20-Gly-|-Glu-21 in the B chain of insulin. Clots milk, and activates trypsinogen.. Secreted aspartic endopeptidase that allows assimilation of proteinaceous substrates. The scissile peptide bond is attacked by a nucleophilic water molecule activated by two aspartic residues in the active site. Shows a broad primary substrate specificity. Favors hydrophobic residues at the P1 and P1' positions, but can also activate trypsinogen and hydrolyze the B chain of insulin between positions 'Gly-20' and 'Glu-21'. The sequence is that of Penicillopepsin-3 from Penicillium janthinellum (Penicillium vitale).